A 484-amino-acid chain; its full sequence is 6-phosphogluconate dehydrogenase, decarboxylating (484 aa).

Residues 11–16 (GLAVMG), 34–36 (NRT), 76–78 (VRA), and N104 each bind NADP(+). Residues N104 and 130–132 (SGG) each bind substrate. Residue K185 is the Proton acceptor of the active site. Substrate is bound at residue 188–189 (HN). Residue E192 is the Proton donor of the active site. Residues Y193, K262, R289, R447, and H453 each contribute to the substrate site.

This sequence belongs to the 6-phosphogluconate dehydrogenase family. As to quaternary structure, homodimer.

The enzyme catalyses 6-phospho-D-gluconate + NADP(+) = D-ribulose 5-phosphate + CO2 + NADPH. The protein operates within carbohydrate degradation; pentose phosphate pathway; D-ribulose 5-phosphate from D-glucose 6-phosphate (oxidative stage): step 3/3. Functionally, catalyzes the oxidative decarboxylation of 6-phosphogluconate to ribulose 5-phosphate and CO(2), with concomitant reduction of NADP to NADPH. The sequence is that of 6-phosphogluconate dehydrogenase, decarboxylating from Aggregatibacter actinomycetemcomitans (Actinobacillus actinomycetemcomitans).